A 1387-amino-acid polypeptide reads, in one-letter code: DNA-directed RNA polymerase subunit beta (1387 aa).

The protein belongs to the RNA polymerase beta chain family. The RNAP catalytic core consists of 2 alpha, 1 beta, 1 beta' and 1 omega subunit. When a sigma factor is associated with the core the holoenzyme is formed, which can initiate transcription.

The catalysed reaction is RNA(n) + a ribonucleoside 5'-triphosphate = RNA(n+1) + diphosphate. Its function is as follows. DNA-dependent RNA polymerase catalyzes the transcription of DNA into RNA using the four ribonucleoside triphosphates as substrates. This is DNA-directed RNA polymerase subunit beta from Xanthomonas campestris pv. campestris (strain 8004).